A 141-amino-acid chain; its full sequence is uncharacterized protein (141 aa).

Residues lysine 24–threonine 52 adopt a coiled-coil conformation.

This is an uncharacterized protein from Invertebrate iridescent virus 6 (IIV-6).